The chain runs to 83 residues: NADH dehydrogenase [ubiquinone] iron-sulfur protein 5-B (83 aa).

Positions 11–52 (KGRCYDFWMDFSECMSHCREPKDCTLLREDYLECLHHSKEFQ) constitute a CHCH domain. 2 short sequence motifs (cx9C motif) span residues 14–24 (CYDFWMDFSEC) and 34–44 (CTLLREDYLEC). 2 disulfides stabilise this stretch: Cys-14-Cys-44 and Cys-24-Cys-34. The interval 62 to 83 (QRKLRAASRKGEETGDGTHTHH) is disordered.

The protein belongs to the complex I NDUFS5 subunit family. Complex I is composed of at least 49 different subunits. This is a component of the iron-sulfur (IP) fragment of the enzyme.

It localises to the mitochondrion. It is found in the mitochondrion inner membrane. The protein localises to the mitochondrion intermembrane space. Accessory subunit of the mitochondrial membrane respiratory chain NADH dehydrogenase (Complex I), that is believed not to be involved in catalysis. Complex I functions in the transfer of electrons from NADH to the respiratory chain. The immediate electron acceptor for the enzyme is believed to be ubiquinone. The sequence is that of NADH dehydrogenase [ubiquinone] iron-sulfur protein 5-B from Arabidopsis thaliana (Mouse-ear cress).